Consider the following 91-residue polypeptide: Large ribosomal subunit protein bL31B (91 aa).

The protein belongs to the bacterial ribosomal protein bL31 family. Type B subfamily. In terms of assembly, part of the 50S ribosomal subunit.

In Mycolicibacterium vanbaalenii (strain DSM 7251 / JCM 13017 / BCRC 16820 / KCTC 9966 / NRRL B-24157 / PYR-1) (Mycobacterium vanbaalenii), this protein is Large ribosomal subunit protein bL31B.